The chain runs to 87 residues: UPF0367 protein Pro_0144 (87 aa).

Belongs to the UPF0367 family.

This chain is UPF0367 protein Pro_0144, found in Prochlorococcus marinus (strain SARG / CCMP1375 / SS120).